A 351-amino-acid chain; its full sequence is Methylthioribose-1-phosphate isomerase (351 aa).

Asp-244 (proton donor) is an active-site residue.

The protein belongs to the eIF-2B alpha/beta/delta subunits family. MtnA subfamily.

It is found in the cytoplasm. The protein resides in the nucleus. It catalyses the reaction 5-(methylsulfanyl)-alpha-D-ribose 1-phosphate = 5-(methylsulfanyl)-D-ribulose 1-phosphate. Its pathway is amino-acid biosynthesis; L-methionine biosynthesis via salvage pathway; L-methionine from S-methyl-5-thio-alpha-D-ribose 1-phosphate: step 1/6. In terms of biological role, catalyzes the interconversion of methylthioribose-1-phosphate (MTR-1-P) into methylthioribulose-1-phosphate (MTRu-1-P). This Anopheles gambiae (African malaria mosquito) protein is Methylthioribose-1-phosphate isomerase.